A 508-amino-acid polypeptide reads, in one-letter code: MYIGIDDTDSREKYCTTYVGTLIVEELLKLGYILEEPRLIRMNPMVKYKTRGNGGVCLKIVGKIGAEDTKKNNSNKNNSNNGTPKNIEYDYKQALEDFNRGNIDYEALSKESNCKSSLKSHIKSLKSLKSYRTTLNPEITEESYKLSKSEYLEVKTIVSSIVEKYTDFDCSTTNPGIVLINSRLTRQKKAILKNYYNSVLTEIVSLDEAEAIIKKVGAEYIKYKKGLGIIGSLGAISSYFSENQTYTYELLAYRENDKWGTERYVIDSSVVEMDKMTYPYTFNNVDNNKNIIAPNTKCPVLYGIRGVSKEILFNAKEIVESENIDKYMIYRTNQGTDHHLRIMNIADARENTGAILSGYISEEFTEITGGHVLIELTDSTGSINCIAYEPTKKFRHIIRELAIGDLITVYGTIREEPYQLNIEKINVVKLNNLYEKVKKCECGGTLKSKGVSSGYKCNKCGKRLKYDEIPKIQIVRNLREGFYEVPPSARRHLSMPLSLINYLPNNLR.

A DNA-binding region (OB) is located at residues 367 to 427; it reads ITGGHVLIEL…YQLNIEKINV (61 aa).

This sequence belongs to the TiaS family.

The protein resides in the cytoplasm. It catalyses the reaction cytidine(34) in tRNA(Ile2) + agmatine + ATP + H2O = 2-agmatinylcytidine(34) in tRNA(Ile2) + AMP + 2 phosphate + 2 H(+). Its function is as follows. ATP-dependent agmatine transferase that catalyzes the formation of 2-agmatinylcytidine (agm2C) at the wobble position (C34) of tRNA(Ile2), converting the codon specificity from AUG to AUA. This chain is tRNA(Ile2) 2-agmatinylcytidine synthetase TiaS, found in Methanococcus voltae (strain ATCC BAA-1334 / A3).